The primary structure comprises 422 residues: 3-isopropylmalate dehydratase large subunit (422 aa).

[4Fe-4S] cluster is bound by residues Cys-294, Cys-354, and Cys-357.

It belongs to the aconitase/IPM isomerase family. LeuC type 2 subfamily. In terms of assembly, heterodimer of LeuC and LeuD. The cofactor is [4Fe-4S] cluster.

The enzyme catalyses (2R,3S)-3-isopropylmalate = (2S)-2-isopropylmalate. The protein operates within amino-acid biosynthesis; L-leucine biosynthesis; L-leucine from 3-methyl-2-oxobutanoate: step 2/4. Catalyzes the isomerization between 2-isopropylmalate and 3-isopropylmalate, via the formation of 2-isopropylmaleate. The chain is 3-isopropylmalate dehydratase large subunit from Mycolicibacterium smegmatis (strain ATCC 700084 / mc(2)155) (Mycobacterium smegmatis).